Reading from the N-terminus, the 555-residue chain is CTP synthase (555 aa).

The amidoligase domain stretch occupies residues 1-265 (MTRYIFITGG…GNRVCEKLNI (265 aa)). Serine 13 is a binding site for CTP. Residue serine 13 participates in UTP binding. ATP contacts are provided by residues 14-19 (SLGKGI) and aspartate 71. Mg(2+) contacts are provided by aspartate 71 and glutamate 139. CTP is bound by residues 146–148 (DIE), 186–191 (KTKPTQ), and lysine 222. UTP contacts are provided by residues 186-191 (KTKPTQ) and lysine 222. One can recognise a Glutamine amidotransferase type-1 domain in the interval 290-541 (TVAVVGKYVD…IKAGLAAKEA (252 aa)). Residue glycine 351 coordinates L-glutamine. Cysteine 378 serves as the catalytic Nucleophile; for glutamine hydrolysis. Residues 379–382 (LGMQ), glutamate 402, and arginine 469 each bind L-glutamine. Active-site residues include histidine 514 and glutamate 516.

The protein belongs to the CTP synthase family. In terms of assembly, homotetramer.

The catalysed reaction is UTP + L-glutamine + ATP + H2O = CTP + L-glutamate + ADP + phosphate + 2 H(+). The enzyme catalyses L-glutamine + H2O = L-glutamate + NH4(+). It catalyses the reaction UTP + NH4(+) + ATP = CTP + ADP + phosphate + 2 H(+). The protein operates within pyrimidine metabolism; CTP biosynthesis via de novo pathway; CTP from UDP: step 2/2. With respect to regulation, allosterically activated by GTP, when glutamine is the substrate; GTP has no effect on the reaction when ammonia is the substrate. The allosteric effector GTP functions by stabilizing the protein conformation that binds the tetrahedral intermediate(s) formed during glutamine hydrolysis. Inhibited by the product CTP, via allosteric rather than competitive inhibition. In terms of biological role, catalyzes the ATP-dependent amination of UTP to CTP with either L-glutamine or ammonia as the source of nitrogen. Regulates intracellular CTP levels through interactions with the four ribonucleotide triphosphates. The polypeptide is CTP synthase (Coxiella burnetii (strain CbuK_Q154) (Coxiella burnetii (strain Q154))).